The following is an 84-amino-acid chain: Small ribosomal subunit protein bS20 (84 aa).

Belongs to the bacterial ribosomal protein bS20 family.

Functionally, binds directly to 16S ribosomal RNA. The polypeptide is Small ribosomal subunit protein bS20 (Parabacteroides distasonis (strain ATCC 8503 / DSM 20701 / CIP 104284 / JCM 5825 / NCTC 11152)).